The primary structure comprises 104 residues: MKREAFKMFLKPGFEKEYEKRHAAIWPELKKMLSDGGVYDYSIYWDKDTNILFACQKTKGEESSQDMGANPIVQKWWDYMADIMEVNPDNSPVTIPLPEVFHMD.

Position 18 (Y18) interacts with substrate. H22 serves as the catalytic Proton donor. Substrate contacts are provided by residues Y41 and 76 to 77 (WW).

The protein belongs to the rhamnose mutarotase family. Homodimer.

It is found in the cytoplasm. The catalysed reaction is alpha-L-rhamnose = beta-L-rhamnose. It participates in carbohydrate metabolism; L-rhamnose metabolism. Its function is as follows. Involved in the anomeric conversion of L-rhamnose. This Phocaeicola vulgatus (strain ATCC 8482 / DSM 1447 / JCM 5826 / CCUG 4940 / NBRC 14291 / NCTC 11154) (Bacteroides vulgatus) protein is L-rhamnose mutarotase.